A 153-amino-acid polypeptide reads, in one-letter code: Transcriptional repressor NrdR (153 aa).

Residues 3–34 (CPFCAHDDSQVKDSRPAEDNAAIRRRRQCSKC) fold into a zinc finger. The ATP-cone domain occupies 49–139 (VTVVKSDDKR…VYRDFSEARD (91 aa)).

It belongs to the NrdR family. The cofactor is Zn(2+).

Functionally, negatively regulates transcription of bacterial ribonucleotide reductase nrd genes and operons by binding to NrdR-boxes. The chain is Transcriptional repressor NrdR from Erythrobacter litoralis (strain HTCC2594).